The sequence spans 130 residues: Guanyl-specific ribonuclease T1 (130 aa).

The first 26 residues, 1-26 (MMYSKLLTLTTLLLPTALALPSLVER), serve as a signal peptide directing secretion. 2 disulfide bridges follow: cysteine 28–cysteine 36 and cysteine 32–cysteine 129. Residue histidine 66 is part of the active site. Catalysis depends on glutamate 84, which acts as the Proton acceptor. Residue histidine 118 is the Proton donor of the active site.

It belongs to the ribonuclease N1/T1 family. In terms of assembly, monomer.

It catalyses the reaction [RNA] containing guanosine + H2O = an [RNA fragment]-3'-guanosine-3'-phosphate + a 5'-hydroxy-ribonucleotide-3'-[RNA fragment].. The sequence is that of Guanyl-specific ribonuclease T1 (rntA) from Aspergillus oryzae (strain ATCC 42149 / RIB 40) (Yellow koji mold).